A 257-amino-acid chain; its full sequence is UPF0246 protein Sbal195_1149 (257 aa).

The protein belongs to the UPF0246 family.

The protein is UPF0246 protein Sbal195_1149 of Shewanella baltica (strain OS195).